A 129-amino-acid chain; its full sequence is D-ribose pyranase (129 aa).

Catalysis depends on histidine 20, which acts as the Proton donor. Substrate contacts are provided by residues aspartate 28, histidine 96, and 118 to 120 (YAN).

It belongs to the RbsD / FucU family. RbsD subfamily. As to quaternary structure, homodecamer.

The protein resides in the cytoplasm. It carries out the reaction beta-D-ribopyranose = beta-D-ribofuranose. It functions in the pathway carbohydrate metabolism; D-ribose degradation; D-ribose 5-phosphate from beta-D-ribopyranose: step 1/2. In terms of biological role, catalyzes the interconversion of beta-pyran and beta-furan forms of D-ribose. This chain is D-ribose pyranase, found in Streptomyces avermitilis (strain ATCC 31267 / DSM 46492 / JCM 5070 / NBRC 14893 / NCIMB 12804 / NRRL 8165 / MA-4680).